Consider the following 148-residue polypeptide: Small ribosomal subunit protein uS15 (148 aa).

Positions 1 to 14 (MGRLHSHRHGKSHS) are enriched in basic residues. The tract at residues 1 to 27 (MGRLHSHRHGKSHSIRPSSPKAPSWIQ) is disordered.

It belongs to the universal ribosomal protein uS15 family. Part of the 30S ribosomal subunit.

This is Small ribosomal subunit protein uS15 from Cenarchaeum symbiosum (strain A).